The chain runs to 183 residues: uncharacterized protein (183 aa).

This is an uncharacterized protein from Methanocaldococcus jannaschii (strain ATCC 43067 / DSM 2661 / JAL-1 / JCM 10045 / NBRC 100440) (Methanococcus jannaschii).